We begin with the raw amino-acid sequence, 389 residues long: Zinc finger C2HC domain-containing protein 1C homolog (389 aa).

Disordered stretches follow at residues 16-44 (MLPHNTTEAPGPHSAKQDSYEQGDSSQQS) and 84-115 (SYPHCTGISQQDPESDSQGQGKGLFYSSGPQS). Polar residues-rich tracts occupy residues 35 to 44 (YEQGDSSQQS) and 90 to 102 (GISQQDPESDSQG). The stretch at 211 to 266 (VQIRRLEAAGESLEEEIRRKQILLRGKLKKTEEELRRIQMQKEQAKENENRELQKI) forms a coiled coil. 2 disordered regions span residues 301 to 320 (REDETWGRSQQNSSPFQLSD) and 343 to 389 (SELS…PQLG). Residues 307-317 (GRSQQNSSPFQ) are compositionally biased toward polar residues. Positions 368 to 382 (SSLSMAPDSSGSSGS) are enriched in low complexity.

This sequence belongs to the ZC2HC1 family.

This is Zinc finger C2HC domain-containing protein 1C homolog (ZC2HC1C) from Pongo abelii (Sumatran orangutan).